Reading from the N-terminus, the 155-residue chain is uncharacterized protein (155 aa).

The N-terminal stretch at 1–24 (MQQLSKRRLSALFVTAFLPVTAFA) is a signal peptide.

This is an uncharacterized protein from Chromohalobacter salexigens (strain ATCC BAA-138 / DSM 3043 / CIP 106854 / NCIMB 13768 / 1H11).